The following is a 485-amino-acid chain: Aspartyl/glutamyl-tRNA(Asn/Gln) amidotransferase subunit B (485 aa).

It belongs to the GatB/GatE family. GatB subfamily. Heterotrimer of A, B and C subunits.

It catalyses the reaction L-glutamyl-tRNA(Gln) + L-glutamine + ATP + H2O = L-glutaminyl-tRNA(Gln) + L-glutamate + ADP + phosphate + H(+). The catalysed reaction is L-aspartyl-tRNA(Asn) + L-glutamine + ATP + H2O = L-asparaginyl-tRNA(Asn) + L-glutamate + ADP + phosphate + 2 H(+). In terms of biological role, allows the formation of correctly charged Asn-tRNA(Asn) or Gln-tRNA(Gln) through the transamidation of misacylated Asp-tRNA(Asn) or Glu-tRNA(Gln) in organisms which lack either or both of asparaginyl-tRNA or glutaminyl-tRNA synthetases. The reaction takes place in the presence of glutamine and ATP through an activated phospho-Asp-tRNA(Asn) or phospho-Glu-tRNA(Gln). The polypeptide is Aspartyl/glutamyl-tRNA(Asn/Gln) amidotransferase subunit B (Rhodospirillum rubrum (strain ATCC 11170 / ATH 1.1.1 / DSM 467 / LMG 4362 / NCIMB 8255 / S1)).